Consider the following 173-residue polypeptide: ATP synthase subunit b (173 aa).

Residues L12–V32 traverse the membrane as a helical segment.

This sequence belongs to the ATPase B chain family. As to quaternary structure, F-type ATPases have 2 components, F(1) - the catalytic core - and F(0) - the membrane proton channel. F(1) has five subunits: alpha(3), beta(3), gamma(1), delta(1), epsilon(1). F(0) has three main subunits: a(1), b(2) and c(10-14). The alpha and beta chains form an alternating ring which encloses part of the gamma chain. F(1) is attached to F(0) by a central stalk formed by the gamma and epsilon chains, while a peripheral stalk is formed by the delta and b chains.

The protein localises to the cell inner membrane. Its function is as follows. F(1)F(0) ATP synthase produces ATP from ADP in the presence of a proton or sodium gradient. F-type ATPases consist of two structural domains, F(1) containing the extramembraneous catalytic core and F(0) containing the membrane proton channel, linked together by a central stalk and a peripheral stalk. During catalysis, ATP synthesis in the catalytic domain of F(1) is coupled via a rotary mechanism of the central stalk subunits to proton translocation. Functionally, component of the F(0) channel, it forms part of the peripheral stalk, linking F(1) to F(0). The polypeptide is ATP synthase subunit b (Leptospira borgpetersenii serovar Hardjo-bovis (strain JB197)).